The primary structure comprises 682 residues: Penicillin-binding protein activator LpoA (682 aa).

Positions 1-26 (MLSSITVRTKSGRLIPLVLAATLLAA) are cleaved as a signal peptide. The N-palmitoyl cysteine moiety is linked to residue C27. C27 carries the S-diacylglycerol cysteine lipid modification.

It belongs to the LpoA family. Interacts with PBP1a.

The protein localises to the cell outer membrane. Its function is as follows. Regulator of peptidoglycan synthesis that is essential for the function of penicillin-binding protein 1A (PBP1a). This Edwardsiella ictaluri (strain 93-146) protein is Penicillin-binding protein activator LpoA.